Consider the following 246-residue polypeptide: Probable transcriptional regulatory protein PM0980 (246 aa).

This sequence belongs to the TACO1 family.

It is found in the cytoplasm. This is Probable transcriptional regulatory protein PM0980 from Pasteurella multocida (strain Pm70).